The following is a 530-amino-acid chain: Ataxin-10 homolog (530 aa).

It belongs to the ataxin-10 family.

The protein resides in the cytoplasm. Its function is as follows. May play a role in the regulation of cytokinesis. The sequence is that of Ataxin-10 homolog (CTR86) from Candida glabrata (strain ATCC 2001 / BCRC 20586 / JCM 3761 / NBRC 0622 / NRRL Y-65 / CBS 138) (Yeast).